Reading from the N-terminus, the 88-residue chain is Large ribosomal subunit protein bL27 (88 aa).

Positions 1-21 (MAHKKGQGSTQNNRDSAGRRL) are disordered.

Belongs to the bacterial ribosomal protein bL27 family.

The protein is Large ribosomal subunit protein bL27 of Helicobacter pylori (strain J99 / ATCC 700824) (Campylobacter pylori J99).